The primary structure comprises 356 residues: Red-sensitive opsin-2 (356 aa).

Topologically, residues Met-1–Val-48 are extracellular. An N-linked (GlcNAc...) asparagine glycan is attached at Asn-30. Residues Tyr-49–Ala-73 traverse the membrane as a helical segment. Residues Thr-74 to Asn-85 are Cytoplasmic-facing. The helical transmembrane segment at Trp-86–Val-111 threads the bilayer. Residues Phe-112–Glu-125 are Extracellular-facing. Cys-122 and Cys-199 are oxidised to a cystine. Residues Gly-126 to Trp-145 traverse the membrane as a helical segment. At Glu-146 to Trp-164 the chain is on the cytoplasmic side. The helical transmembrane segment at Ala-165–Ser-188 threads the bilayer. At Arg-189–Ser-214 the chain is on the extracellular side. The chain crosses the membrane as a helical span at residues Tyr-215 to Ile-242. Topologically, residues His-243–Arg-264 are cytoplasmic. The helical transmembrane segment at Met-265 to Ala-288 threads the bilayer. Topologically, residues Ala-289–His-296 are extracellular. The helical transmembrane segment at Pro-297–Met-321 threads the bilayer. The residue at position 308 (Lys-308) is an N6-(retinylidene)lysine. Residues Asn-322 to Ala-356 are Cytoplasmic-facing.

It belongs to the G-protein coupled receptor 1 family. Opsin subfamily. In terms of processing, phosphorylated on some or all of the serine and threonine residues present in the C-terminal region.

Its subcellular location is the membrane. Its function is as follows. Visual pigments are the light-absorbing molecules that mediate vision. They consist of an apoprotein, opsin, covalently linked to cis-retinal. This chain is Red-sensitive opsin-2 (opn1lw2), found in Danio rerio (Zebrafish).